We begin with the raw amino-acid sequence, 111 residues long: uncharacterized protein (111 aa).

The protein belongs to the asfivirus E111R family.

This is an uncharacterized protein from Ornithodoros (relapsing fever ticks).